Consider the following 112-residue polypeptide: MIQATIRRSHDKGILSFEMTGHANFAEHGQDLVCAGVTAVVFGAVNAVIVLAGFEPLLDIGEDGGYFYFEFPESLDPEARQKAQLLIEGMIVSLETIERDYKDNLRVTTNII.

The active-site Proton donor is His-22. The Nucleophile role is filled by Cys-34.

It belongs to the Prp family. Homodimer.

In terms of biological role, an essential cysteine protease that cleaves the N-terminus from ribosomal protein bL27. The polypeptide is Ribosomal processing cysteine protease Prp (Bacillus subtilis (strain 168)).